Here is a 209-residue protein sequence, read N- to C-terminus: Large ribosomal subunit protein uL4 (209 aa).

The segment at 45–77 (RQGTHKAKERAEVTGSTRKIKKQKGTGTARAGS) is disordered.

Belongs to the universal ribosomal protein uL4 family. Part of the 50S ribosomal subunit.

In terms of biological role, one of the primary rRNA binding proteins, this protein initially binds near the 5'-end of the 23S rRNA. It is important during the early stages of 50S assembly. It makes multiple contacts with different domains of the 23S rRNA in the assembled 50S subunit and ribosome. Functionally, forms part of the polypeptide exit tunnel. The polypeptide is Large ribosomal subunit protein uL4 (Flavobacterium johnsoniae (strain ATCC 17061 / DSM 2064 / JCM 8514 / BCRC 14874 / CCUG 350202 / NBRC 14942 / NCIMB 11054 / UW101) (Cytophaga johnsonae)).